The primary structure comprises 342 residues: D-erythrose-4-phosphate dehydrogenase (342 aa).

NAD(+) is bound at residue 12–13 (RI). Residues 154-156 (SCT), R200, 213-214 (TK), and R236 contribute to the substrate site. The active-site Nucleophile is the C155. N318 contributes to the NAD(+) binding site.

This sequence belongs to the glyceraldehyde-3-phosphate dehydrogenase family. Epd subfamily. In terms of assembly, homotetramer.

It localises to the cytoplasm. It catalyses the reaction D-erythrose 4-phosphate + NAD(+) + H2O = 4-phospho-D-erythronate + NADH + 2 H(+). It participates in cofactor biosynthesis; pyridoxine 5'-phosphate biosynthesis; pyridoxine 5'-phosphate from D-erythrose 4-phosphate: step 1/5. Catalyzes the NAD-dependent conversion of D-erythrose 4-phosphate to 4-phosphoerythronate. In Klebsiella pneumoniae (strain 342), this protein is D-erythrose-4-phosphate dehydrogenase.